A 474-amino-acid polypeptide reads, in one-letter code: Cysteine protease ATG4A (474 aa).

Residues Met1–Gln32 are disordered. The active-site Nucleophile is the Cys161. Residues Asp358 and His360 contribute to the active site. Polar residues predominate over residues Lys439–Gly449. Residues Lys439–Leu474 form a disordered region.

The protein belongs to the peptidase C54 family. As to quaternary structure, interacts with ATG8.

It localises to the cytoplasm. The catalysed reaction is [protein]-C-terminal L-amino acid-glycyl-phosphatidylethanolamide + H2O = [protein]-C-terminal L-amino acid-glycine + a 1,2-diacyl-sn-glycero-3-phosphoethanolamine. Cysteine protease that plays a key role in autophagy by mediating both proteolytic activation and delipidation of ATG8 family proteins. The protease activity is required for proteolytic activation of ATG8 family proteins: cleaves the C-terminal amino acid of ATG8 proteins to reveal a C-terminal glycine. Exposure of the glycine at the C-terminus is essential for ATG8 proteins conjugation to phosphatidylethanolamine (PE) and insertion to membranes, which is necessary for autophagy. In addition to the protease activity, also mediates delipidation of PE-conjugated ATG8 proteins. In Oryza sativa subsp. japonica (Rice), this protein is Cysteine protease ATG4A (ATG4A).